The following is a 314-amino-acid chain: Secreted frizzled-related protein 1 (314 aa).

The N-terminal stretch at 1 to 31 (MGIGRSEGGRRGAALGVLLALGAALLAVGSA) is a signal peptide. The FZ domain maps to 53 to 169 (TKPPQCVDIP…FPEGDVCIAM (117 aa)). Disulfide bonds link C58–C121, C68–C114, C105–C140, C129–C166, and C133–C157. A glycan (N-linked (GlcNAc...) asparagine) is linked at N173. 3 disulfides stabilise this stretch: C186–C256, C189–C258, and C203–C306. One can recognise an NTR domain in the interval 186 to 306 (CPPCDNELKS…FMKKMKNHEC (121 aa)).

It belongs to the secreted frizzled-related protein (sFRP) family. In terms of assembly, interacts with WNT1, WNT2 and FRZD6. Interacts with WNT4, WNT8 and MYOC. Widely expressed. Absent from lung, liver and peripheral blood leukocytes. Highest levels in heart and fetal kidney. Also expressed in testis, ovary, fetal brain and lung, leiomyomal cells, myometrial cells and vascular smooth muscle cells. Expressed in foreskin fibroblasts and in keratinocytes.

It localises to the secreted. In terms of biological role, soluble frizzled-related proteins (sFRPS) function as modulators of Wnt signaling through direct interaction with Wnts. They have a role in regulating cell growth and differentiation in specific cell types. SFRP1 decreases intracellular beta-catenin levels. Has antiproliferative effects on vascular cells, in vitro and in vivo, and can induce, in vivo, an angiogenic response. In vascular cell cycle, delays the G1 phase and entry into the S phase. In kidney development, inhibits tubule formation and bud growth in metanephroi. Inhibits WNT1/WNT4-mediated TCF-dependent transcription. The sequence is that of Secreted frizzled-related protein 1 (SFRP1) from Homo sapiens (Human).